The chain runs to 5641 residues: Cyclochlorotine synthetase (5641 aa).

Positions 95 to 124 (PENLNGHLIGSTNGHKKQWENDSADDKRGQ) are disordered. Over residues 111 to 124 (KQWENDSADDKRGQ) the composition is skewed to basic and acidic residues. The tract at residues 217-622 (FTENVQRYPT…GRRDTQVKIR (406 aa)) is adenylation (A) domain 1. The Carrier 1 domain maps to 816–892 (TEEEYKIQTL…DLVSNCKMSA (77 aa)). A thiolation (T) domain 1 region spans residues 821–889 (KIQTLKEIWS…QLSDLVSNCK (69 aa)). Ser-853 bears the O-(pantetheine 4'-phosphoryl)serine mark. A condensation (C) domain 1 region spans residues 926–1333 (EDVYPCTPLQ…AHVAEQIGQP (408 aa)). An adenylation (A) domain 2 region spans residues 1390-1768 (DGNLTFEELN…ISRATTQIKI (379 aa)). The 77-residue stretch at 1902 to 1978 (IELSEKQENM…QLVMIATELT (77 aa)) folds into the Carrier 2 domain. Residues 1907 to 1975 (KQENMARLWA…RFDQLVMIAT (69 aa)) are thiolation (T) domain 2. Ser-1939 bears the O-(pantetheine 4'-phosphoryl)serine mark. The tract at residues 2022–2438 (DIYACTPFQE…DLASEQDLAK (417 aa)) is condensation (C) domain 2. Residues 2459-2859 (AEKARQHPNK…GRADTQVKLR (401 aa)) are adenylation (A) domain 3. The 77-residue stretch at 2976–3052 (GPLTEMETTL…GMAIKIQPIH (77 aa)) folds into the Carrier 3 domain. The thiolation (T) domain 3 stretch occupies residues 2977–3049 (PLTEMETTLA…NLAGMAIKIQ (73 aa)). Position 3013 is an O-(pantetheine 4'-phosphoryl)serine (Ser-3013). The tract at residues 3089–3482 (DIYPCTPLQV…LETVLSAFST (394 aa)) is condensation (C) domain 3. An adenylation (A) domain 4 region spans residues 3523–3873 (VQRAPDKVAI…IARKDLQVKL (351 aa)). In terms of domain architecture, Carrier 4 spans 4005–4081 (IPSTPTEMKM…ELATKIAPRI (77 aa)). Positions 4010 to 4078 (TEMKMQQLWA…RLSELATKIA (69 aa)) are thiolation (T) domain 4. The residue at position 4042 (Ser-4042) is an O-(pantetheine 4'-phosphoryl)serine. The interval 4123–4549 (KDVYPCTPLQ…QSLDSLSQQD (427 aa)) is condensation (C) domain 4. The interval 4574 to 4982 (QEIAGRHPDA…GRIGTDIKLR (409 aa)) is adenylation (A) domain 5. Residues 5118-5194 (PPSTQEEKVI…SLAEKISWES (77 aa)) enclose the Carrier 5 domain. The thiolation (T) domain 5 stretch occupies residues 5123–5191 (EEKVIAALWA…KLASLAEKIS (69 aa)). Ser-5155 carries the post-translational modification O-(pantetheine 4'-phosphoryl)serine. Residues 5260–5556 (AYLDIGPDVQ…DKCTTCVSGS (297 aa)) form a condensation (C) domain 5 region.

This sequence belongs to the NRP synthetase family.

The protein operates within mycotoxin biosynthesis. Its function is as follows. Nonribosomal peptide synthetase; part of the gene cluster that mediates the biosynthesis of the mycotoxin cyclochlorotine, a hepatotoxic and carcinogenic cyclic chlorinated pentapeptide. Within the pathway, The NRPS cctN initially catalyzes the condensation of L-serine (Ser), Pro, L-2-aminobutyrate (2Abu), Ser, and beta-Phe in this order. During the chain elongation, side-chain hydroxy group of Ser4 would be used as a nucleophile, giving isocyclotine as a product of terminal condensation-like (CT) domain-catalyzed cyclization. After the dichlorination of Pro2 catalyzed by cctP2 to produce isocyclochlorotine, the cctO-mediated transacylation of isocyclochlorotine can furnish cyclochlorotine. The subsequent hydroxylation of cyclochlorotine by cctR yields hydroxycyclochlorotine as the final product. CctP1 probably acts as a phenylalanine aminomutase and provides the uncommon building block beta-Phe. Furthermore, 2Abu can be synthesized from threonine by one of the threonine dehydratases and transaminases localized outside of the cluster. The functions of the remaining proteins encoded by the cluster, cctM and cctT, have not been identified yet. This chain is Cyclochlorotine synthetase, found in Talaromyces islandicus (Penicillium islandicum).